Consider the following 357-residue polypeptide: Outer membrane porin protein OmpD (357 aa).

The signal sequence occupies residues 1 to 21 (MKLKLVAVAVTTLLAAGAVNA).

Belongs to the Gram-negative porin family. Homotrimer.

The protein resides in the cell outer membrane. Its function is as follows. Forms pores that allow passive diffusion of small molecules across the outer membrane. The protein is Outer membrane porin protein OmpD (ompD) of Citrobacter koseri (strain ATCC BAA-895 / CDC 4225-83 / SGSC4696).